The primary structure comprises 544 residues: Chaperonin GroEL (544 aa).

ATP contacts are provided by residues 30 to 33 (TLGP), Lys51, 87 to 91 (DGTTT), Gly415, and Asp496.

Belongs to the chaperonin (HSP60) family. Forms a cylinder of 14 subunits composed of two heptameric rings stacked back-to-back. Interacts with the co-chaperonin GroES.

It localises to the cytoplasm. It catalyses the reaction ATP + H2O + a folded polypeptide = ADP + phosphate + an unfolded polypeptide.. Its function is as follows. Together with its co-chaperonin GroES, plays an essential role in assisting protein folding. The GroEL-GroES system forms a nano-cage that allows encapsulation of the non-native substrate proteins and provides a physical environment optimized to promote and accelerate protein folding. This is Chaperonin GroEL from Granulibacter bethesdensis (strain ATCC BAA-1260 / CGDNIH1).